Reading from the N-terminus, the 65-residue chain is MNSDVIKGKWKQLTGKIKERWGDLTDDDLQAADGHAEYLVGKLQERYGWSKERAEQEVRDFSDRL.

This sequence belongs to the UPF0337 (CsbD) family.

The sequence is that of UPF0337 protein PA4738 from Pseudomonas aeruginosa (strain ATCC 15692 / DSM 22644 / CIP 104116 / JCM 14847 / LMG 12228 / 1C / PRS 101 / PAO1).